A 688-amino-acid polypeptide reads, in one-letter code: Mitochondrial potassium channel ATP-binding subunit (688 aa).

The N-terminal 31 residues, 1 to 31 (MLFHFLQAGLRQCRPPARLVGLETGLSGARG), are a transit peptide targeting the mitochondrion. A run of 4 helical transmembrane segments spans residues 115 to 135 (PQLI…LLNI), 168 to 188 (LKLL…IVLL), 268 to 288 (GLLL…GSFL), and 342 to 362 (VLGV…NCIV). The ABC transmembrane type-1 domain occupies 121–409 (LTAVLLAFGA…MSVLFGQVVR (289 aa)). Residues 442 to 679 (IHFKDVSFSY…GGLYADLIRR (238 aa)) form the ABC transporter domain. An ATP-binding site is contributed by 477–484 (GQSGGGKS).

It belongs to the ABC transporter superfamily. ABCB family. Multidrug resistance exporter (TC 3.A.1.201) subfamily. Component of the mitochondrial potassium channel (mitoK(ATP)).

The protein resides in the mitochondrion inner membrane. ATP-binding subunit of the mitochondrial ATP-gated potassium channel (mitoK(ATP)). Together with pore-forming subunit CCDC51/MITOK of the mitoK(ATP) channel, mediates ATP-dependent potassium currents across the mitochondrial inner membrane. An increase in ATP intracellular levels closes the channel, inhibiting K(+) transport, whereas a decrease in ATP levels enhances K(+) uptake in the mitochondrial matrix. Plays a role in mitochondrial iron transport. Required for maintenance of normal cardiac function, possibly by influencing mitochondrial iron export and regulating the maturation of cytosolic iron sulfur cluster-containing enzymes. The polypeptide is Mitochondrial potassium channel ATP-binding subunit (Xenopus tropicalis (Western clawed frog)).